The sequence spans 158 residues: Pycsar effector protein SaPycTM (158 aa).

3 helical membrane passes run 20-40 (FADA…NFNF), 53-73 (IFNF…AFAV), and 136-156 (VFII…FQII).

The protein resides in the cell membrane. Pycsar (pyrimidine cyclase system for antiphage resistance) provides immunity against bacteriophage. The pyrimidine cyclase (PycC) synthesizes cyclic nucleotides in response to infection; these serve as specific second messenger signals. The signals activate the adjacent effector, leading to bacterial cell death and abortive phage infection. A clade E Pycsar system. Functionally, the effector gene of a two-gene Pycsar system. Expression of this and adjacent SaPycC cytidylate cyclase (AC P0DV38) probably confers resistance to bacteriophage. The genes are probably only expressed in response to bacteriophage infection. Probably only responds to cCMP (produced by its cognate NTP cyclase), acts by impairing membrane integrity. In Staphylococcus aureus, this protein is Pycsar effector protein SaPycTM.